The following is a 220-amino-acid chain: Zip homologous protein 1 (220 aa).

The RING-type zinc finger occupies 6-44; the sequence is CNGCGCSPSKRQFFITACSHVFCETCRTTPTADFCHLCK. Residues 124-155 are a coiled coil; the sequence is LTSFEENNRKKLEDIERENEKLRNLISALELK. Disordered regions lie at residues 166–186 and 201–220; these read EFFM…SDVD and RSDS…GSLF. A compositionally biased stretch (polar residues) spans 171 to 180; sequence GTPTSSNPSV.

In terms of assembly, interacts with zhp-2; the interaction is required for their chromosome association and stability. In terms of tissue distribution, expressed in the germline.

Its subcellular location is the chromosome. Its function is as follows. Recruited co-dependently with zhp-2 to the synaptonemal complex between homologous chromosome pairs to regulate the formation and number of crossover events between homologs during meiotic recombination. Together with zhp-2, promotes the accumulation of pro-crossover proteins, including zhp-3 and zhp-4, at a designated crossover site along the recombination intermediate. Limits the number of crossover sites along a recombination intermediate by restricting the association of these pro-crossover proteins with other recombination sites during late prophase. Also, together with zhp-2, plays a role in chromosome remodeling following crossover formation to promote two successive rounds of chromosome segregation during meiosis. The chain is Zip homologous protein 1 from Caenorhabditis elegans.